The following is a 495-amino-acid chain: Probable biotin-dependent acyl-coenzyme A carboxylase beta3 subunit (495 aa).

Positions 1–236 constitute a CoA carboxyltransferase N-terminal domain; the sequence is MSRITTDQLR…PLPAPQTPAP (236 aa). Positions 242 to 470 constitute a CoA carboxyltransferase C-terminal domain; it reads TWDSVVASRR…SNAIAAEVHA (229 aa).

This sequence belongs to the AccD/PCCB family. As to quaternary structure, the biotin-dependent acyl-CoA carboxylase complex is composed of an AccA protein, which contains the biotin carboxylase (BC) and biotin carboxyl carrier protein (BCCP) domains, and an AccD protein, which contains the carboxyl transferase (CT) domain.

Component of a biotin-dependent acyl-CoA carboxylase complex. This subunit transfers the CO2 from carboxybiotin to the CoA ester substrate. This is Probable biotin-dependent acyl-coenzyme A carboxylase beta3 subunit (accD3) from Mycobacterium bovis (strain ATCC BAA-935 / AF2122/97).